The following is a 465-amino-acid chain: Chromosomal replication initiator protein DnaA (465 aa).

Residues 1–87 form a domain I, interacts with DnaA modulators region; the sequence is MLWTDCLTRL…RPGSILSSSE (87 aa). The tract at residues 81 to 123 is disordered; that stretch reads SILSSSEQPATTTAALQTAPIPQPAKVKREPEPVANTAVSSKS. The span at 88-100 shows a compositional bias: low complexity; sequence QPATTTAALQTAP. The domain II stretch occupies residues 88–127; it reads QPATTTAALQTAPIPQPAKVKREPEPVANTAVSSKSSKKK. The segment at 128–345 is domain III, AAA+ region; sequence LLNPQFTFSL…GALNKVVAIS (218 aa). Glycine 173, glycine 175, lysine 176, and threonine 177 together coordinate ATP. The interval 346 to 465 is domain IV, binds dsDNA; it reads RFKGAPIDLD…YKNLLRLLQS (120 aa).

Belongs to the DnaA family. Oligomerizes as a right-handed, spiral filament on DNA at oriC.

The protein resides in the cytoplasm. In terms of biological role, plays an essential role in the initiation and regulation of chromosomal replication. ATP-DnaA binds to the origin of replication (oriC) to initiate formation of the DNA replication initiation complex once per cell cycle. Binds the DnaA box (a 9 base pair repeat at the origin) and separates the double-stranded (ds)DNA. Forms a right-handed helical filament on oriC DNA; dsDNA binds to the exterior of the filament while single-stranded (ss)DNA is stabiized in the filament's interior. The ATP-DnaA-oriC complex binds and stabilizes one strand of the AT-rich DNA unwinding element (DUE), permitting loading of DNA polymerase. After initiation quickly degrades to an ADP-DnaA complex that is not apt for DNA replication. Binds acidic phospholipids. The chain is Chromosomal replication initiator protein DnaA from Acinetobacter baumannii (strain ATCC 17978 / DSM 105126 / CIP 53.77 / LMG 1025 / NCDC KC755 / 5377).